Reading from the N-terminus, the 246-residue chain is 2-C-methyl-D-erythritol 4-phosphate cytidylyltransferase (246 aa).

The protein belongs to the IspD/TarI cytidylyltransferase family. IspD subfamily.

It carries out the reaction 2-C-methyl-D-erythritol 4-phosphate + CTP + H(+) = 4-CDP-2-C-methyl-D-erythritol + diphosphate. The protein operates within isoprenoid biosynthesis; isopentenyl diphosphate biosynthesis via DXP pathway; isopentenyl diphosphate from 1-deoxy-D-xylulose 5-phosphate: step 2/6. In terms of biological role, catalyzes the formation of 4-diphosphocytidyl-2-C-methyl-D-erythritol from CTP and 2-C-methyl-D-erythritol 4-phosphate (MEP). The polypeptide is 2-C-methyl-D-erythritol 4-phosphate cytidylyltransferase (Chlorobaculum parvum (strain DSM 263 / NCIMB 8327) (Chlorobium vibrioforme subsp. thiosulfatophilum)).